Reading from the N-terminus, the 79-residue chain is Pigment-dispersing hormone type 1 (79 aa).

An N-terminal signal peptide occupies residues 1–22 (MRSAVVVALLVMVAMSLQLTAA). At Ala76 the chain carries Alanine amide.

It belongs to the arthropod PDH family. In terms of tissue distribution, eyestalk.

It is found in the secreted. In terms of biological role, the pigment-dispersing hormone causes the migration of the distal retinal pigment into the proximal end of the pigment chromatophore cells and thus decreases the amount of light entering the retinulas. May also function as a neurotransmitter and/or neuromodulator. In Penaeus vannamei (Whiteleg shrimp), this protein is Pigment-dispersing hormone type 1 (PDH1).